A 383-amino-acid polypeptide reads, in one-letter code: S-adenosylmethionine synthase (383 aa).

ATP is bound at residue His15. Residue Asp17 participates in Mg(2+) binding. Glu43 contacts K(+). L-methionine-binding residues include Glu56 and Gln99. Positions 99-109 are flexible loop; sequence QSPDINQGVDR. ATP-binding positions include 164–166, 230–231, Asp239, 245–246, Ala262, and Lys266; these read DAK, RF, and RK. L-methionine is bound at residue Asp239. L-methionine is bound at residue Lys270.

The protein belongs to the AdoMet synthase family. Homotetramer; dimer of dimers. Mg(2+) serves as cofactor. It depends on K(+) as a cofactor.

The protein resides in the cytoplasm. The enzyme catalyses L-methionine + ATP + H2O = S-adenosyl-L-methionine + phosphate + diphosphate. It functions in the pathway amino-acid biosynthesis; S-adenosyl-L-methionine biosynthesis; S-adenosyl-L-methionine from L-methionine: step 1/1. In terms of biological role, catalyzes the formation of S-adenosylmethionine (AdoMet) from methionine and ATP. The overall synthetic reaction is composed of two sequential steps, AdoMet formation and the subsequent tripolyphosphate hydrolysis which occurs prior to release of AdoMet from the enzyme. The sequence is that of S-adenosylmethionine synthase from Shewanella putrefaciens (strain CN-32 / ATCC BAA-453).